The sequence spans 446 residues: tRNA modification GTPase MnmE (446 aa).

(6S)-5-formyl-5,6,7,8-tetrahydrofolate-binding residues include R21, E77, and K116. The TrmE-type G domain maps to G212–A370. N222 is a K(+) binding site. Residues N222–T227, T241–T247, and D266–G269 contribute to the GTP site. Residue S226 coordinates Mg(2+). Residues T241, V243, and T246 each contribute to the K(+) site. T247 is a Mg(2+) binding site. (6S)-5-formyl-5,6,7,8-tetrahydrofolate is bound at residue K446.

It belongs to the TRAFAC class TrmE-Era-EngA-EngB-Septin-like GTPase superfamily. TrmE GTPase family. As to quaternary structure, homodimer. Heterotetramer of two MnmE and two MnmG subunits. K(+) is required as a cofactor.

It localises to the cytoplasm. In terms of biological role, exhibits a very high intrinsic GTPase hydrolysis rate. Involved in the addition of a carboxymethylaminomethyl (cmnm) group at the wobble position (U34) of certain tRNAs, forming tRNA-cmnm(5)s(2)U34. This Caulobacter vibrioides (strain ATCC 19089 / CIP 103742 / CB 15) (Caulobacter crescentus) protein is tRNA modification GTPase MnmE.